We begin with the raw amino-acid sequence, 847 residues long: Vacuolar membrane protease (847 aa).

Residues 1–17 are Cytoplasmic-facing; that stretch reads MQFGKSLLKHVYTRTFK. A helical transmembrane segment spans residues 18 to 38; the sequence is SSLTCSIFAFTLLMIFFVLDW. Over 39–348 the chain is Vacuolar; that stretch reads KRMNVYPRLD…GSYWQINLNL (310 aa). H146 and D158 together coordinate Zn(2+). E190 functions as the Proton acceptor in the catalytic mechanism. E191 is a binding site for Zn(2+). N208 carries an N-linked (GlcNAc...) asparagine glycan. Residue E216 participates in Zn(2+) binding. A glycan (N-linked (GlcNAc...) asparagine) is linked at N274. H291 contacts Zn(2+). A helical membrane pass occupies residues 349 to 369; it reads HLFLNVVFLIACPAILFMCLF. At 370-381 the chain is on the cytoplasmic side; it reads RFPSLYAQLKKP. The chain crosses the membrane as a helical span at residues 382-402; the sequence is CYLICFTLSSLFVLIFDYVVV. The Vacuolar segment spans residues 403–415; sequence QSLTKLNPYVIHS. The chain crosses the membrane as a helical span at residues 416-436; sequence SPDAVLAFFFLTNLLGLVYSF. Residues 437–454 are Cytoplasmic-facing; that stretch reads RYVATHSRMSNEELSCIE. Residues 455–475 traverse the membrane as a helical segment; it reads IVLIWYVSMFWYISLLIATLT. At 476 to 482 the chain is on the vacuolar side; the sequence is SIVRGLG. Residues 483–503 traverse the membrane as a helical segment; that stretch reads SLYFVNFGFFCSFFCCILTLI. The Cytoplasmic segment spans residues 504-560; it reads RVRYFVDRMVTINRPANPEQMPLVQSTSGNAYGTSRYPQHRLKAVVSKSASVKLNDN. Residues 561–581 form a helical membrane-spanning segment; it reads LWSVLFFSCLVPLPLFTCYNL. Over 582–605 the chain is Vacuolar; sequence LSEVFIPAVHQSLIDGPYSNTCYK. Residues 606-626 traverse the membrane as a helical segment; that stretch reads FAVILVFMAIINSSPFVFRAL. At 627-630 the chain is on the cytoplasmic side; the sequence is SKKS. A helical transmembrane segment spans residues 631-651; it reads SAILLMLWVSLLFNILRAEPF. Topologically, residues 652-847 are vacuolar; the sequence is NEKAPIKFRV…LLKMSKTHVM (196 aa). Residues N726, N734, N800, and N834 are each glycosylated (N-linked (GlcNAc...) asparagine).

The protein belongs to the peptidase M28 family. The cofactor is Zn(2+).

The protein localises to the vacuole membrane. Its function is as follows. May be involved in vacuolar sorting and osmoregulation. The protein is Vacuolar membrane protease of Schizosaccharomyces japonicus (strain yFS275 / FY16936) (Fission yeast).